A 937-amino-acid polypeptide reads, in one-letter code: Protein Niban 1 (937 aa).

Gly-2 is lipidated: N-myristoyl glycine. Phosphoserine occurs at positions 578, 581, 595, 601, and 646. Positions 584 to 595 are enriched in polar residues; that stretch reads DLKTSMGSNQAS. Disordered stretches follow at residues 584-710 and 724-891; these read DLKT…GSLR and SAPE…LGGN. Positions 640 to 651 are enriched in low complexity; it reads ASISGSSPPSGE. Polar residues predominate over residues 655–681; that stretch reads VSVSGVDNSAGNPLSADNSAGPLSSHL. A compositionally biased stretch (basic and acidic residues) spans 688 to 701; that stretch reads EPPKDEETAHKRPE. 2 positions are modified to phosphoserine: Ser-708 and Ser-768. 2 stretches are compositionally biased toward polar residues: residues 802–817 and 855–869; these read PTSQSTGEGLTENTSC and VTVTPQEDATLSSNP.

It belongs to the Niban family. As to expression, detected in brain, lung, spleen and skeletal muscle. Expressed in small renal tumors but not in normal kidney.

It localises to the cytoplasm. The protein resides in the membrane. Functionally, regulates phosphorylation of a number of proteins involved in translation regulation including EIF2A, EIF4EBP1 and RPS6KB1. May be involved in the endoplasmic reticulum stress response. The sequence is that of Protein Niban 1 from Rattus norvegicus (Rat).